The sequence spans 181 residues: Protein GrpE (181 aa).

The protein belongs to the GrpE family. As to quaternary structure, homodimer.

It is found in the cytoplasm. Functionally, participates actively in the response to hyperosmotic and heat shock by preventing the aggregation of stress-denatured proteins, in association with DnaK and GrpE. It is the nucleotide exchange factor for DnaK and may function as a thermosensor. Unfolded proteins bind initially to DnaJ; upon interaction with the DnaJ-bound protein, DnaK hydrolyzes its bound ATP, resulting in the formation of a stable complex. GrpE releases ADP from DnaK; ATP binding to DnaK triggers the release of the substrate protein, thus completing the reaction cycle. Several rounds of ATP-dependent interactions between DnaJ, DnaK and GrpE are required for fully efficient folding. The protein is Protein GrpE of Delftia acidovorans (strain DSM 14801 / SPH-1).